The chain runs to 226 residues: 7-cyano-7-deazaguanine synthase (226 aa).

Residue L9–T19 participates in ATP binding. Residues C192, C200, C203, and C206 each contribute to the Zn(2+) site.

The protein belongs to the QueC family. Zn(2+) serves as cofactor.

The enzyme catalyses 7-carboxy-7-deazaguanine + NH4(+) + ATP = 7-cyano-7-deazaguanine + ADP + phosphate + H2O + H(+). It functions in the pathway purine metabolism; 7-cyano-7-deazaguanine biosynthesis. In terms of biological role, catalyzes the ATP-dependent conversion of 7-carboxy-7-deazaguanine (CDG) to 7-cyano-7-deazaguanine (preQ(0)). The protein is 7-cyano-7-deazaguanine synthase of Methanosphaera stadtmanae (strain ATCC 43021 / DSM 3091 / JCM 11832 / MCB-3).